Here is a 141-residue protein sequence, read N- to C-terminus: Small ribosomal subunit protein bS6 (141 aa).

Residues 110-141 form a disordered region; that stretch reads SRTKVSDQPAAVEAAEAPAAPAAQEESAPASA. Residues 117-141 show a composition bias toward low complexity; that stretch reads QPAAVEAAEAPAAPAAQEESAPASA.

It belongs to the bacterial ribosomal protein bS6 family.

Binds together with bS18 to 16S ribosomal RNA. This chain is Small ribosomal subunit protein bS6, found in Acidobacterium capsulatum (strain ATCC 51196 / DSM 11244 / BCRC 80197 / JCM 7670 / NBRC 15755 / NCIMB 13165 / 161).